The sequence spans 518 residues: MTKNKKYSYGTAGFRTKASDLEAAVYSSGVAAALRSMELKGKTIGVMITASHNPVEDNGVKIIDADGGMLAMEWEDKCTQLANAPSKAEFDFLIKQFLTPTTCQPKVIIGYDTRPSSPRLAELLKVCLDEMSASYIDYGYITTPQLHWLVRLINKSTAASFLEEGPPITEYYDTLTSAFSKIDPSMQDSPTVSRVVVDCANGVGSQPLKTVAGLVKDSLSIELVNTDVRASELLNNGCGADFVKTKQSPPLALEGKIKPNQLYASIDGDADRLIFYYINQNRKFHLLDGDKISTALVGYLNILVKKSGMPFSLGVVQTAYANGASTEYLQDLGITTVFTPTGVKHLHKAAKEFDIGVYFEANGHGTVLFSDKALANLAHPFFTPSPVQAAAIEQLQSYSVLINQAIGDAISDLLATISVLNALHWDASAWSNTYKDLPNKLAKVKVSDRTIYKSTDAERRLVSPDGLQEKIDALVAKYEKGRSFVRASGTEDVVRVYAEASTKQAADELCEKVCQLVL.

Residue T49 is modified to Phosphothreonine. The active-site Phosphoserine intermediate is the S51. S51, D267, D269, and D271 together coordinate Mg(2+). S51 carries the post-translational modification Phosphoserine. Substrate-binding positions include 360 to 362 (EAN), 486 to 490 (RASGT), and R495.

It belongs to the phosphohexose mutase family. It depends on Mg(2+) as a cofactor.

It is found in the cytoplasm. It localises to the nucleus. It catalyses the reaction N-acetyl-alpha-D-glucosamine 1-phosphate = N-acetyl-D-glucosamine 6-phosphate. The protein operates within nucleotide-sugar biosynthesis; UDP-N-acetyl-alpha-D-glucosamine biosynthesis; N-acetyl-alpha-D-glucosamine 1-phosphate from alpha-D-glucosamine 6-phosphate (route I): step 2/2. Its function is as follows. Catalyzes the conversion of GlcNAc-6-P into GlcNAc-1-P during the synthesis of uridine diphosphate/UDP-GlcNAc, which is a biosynthetic precursor of chitin and also supplies the amino sugars for N-linked oligosaccharides of glycoproteins. This chain is Phosphoacetylglucosamine mutase 1, found in Schizosaccharomyces pombe (strain 972 / ATCC 24843) (Fission yeast).